The primary structure comprises 434 residues: CCA tRNA nucleotidyltransferase 1, mitochondrial (434 aa).

The transit peptide at 1–41 (MLRCLYHWHRPVLNRRWSRLCLPKQYLFTMKLQSPEFQSLF) directs the protein to the mitochondrion. Residues Gly-64 and Arg-67 each contribute to the ATP site. CTP is bound by residues Gly-64 and Arg-67. Mg(2+) is bound by residues Asp-77 and Asp-79. The ATP site is built by Arg-151, Asp-194, Arg-197, Arg-200, and Arg-203. CTP is bound by residues Arg-151, Asp-194, Arg-197, Arg-200, and Arg-203. Phosphoserine is present on Ser-400. An N6-acetyllysine modification is found at Lys-402.

This sequence belongs to the tRNA nucleotidyltransferase/poly(A) polymerase family. Monomer, and homodimer; disulfide-linked. The cofactor is Mg(2+).

It is found in the mitochondrion. It localises to the cytoplasm. The protein localises to the nucleus. It carries out the reaction a tRNA precursor + 2 CTP + ATP = a tRNA with a 3' CCA end + 3 diphosphate. The enzyme catalyses a tRNA with a 3' CCA end + 2 CTP + ATP = a tRNA with a 3' CCACCA end + 3 diphosphate. Nucleotidyltransferase that catalyzes the addition and repair of the essential 3'-terminal CCA sequence in tRNAs, which is necessary for the attachment of amino acids to the 3' terminus of tRNA molecules, using CTP and ATP as substrates. tRNA 3'-terminal CCA addition is required both for tRNA processing and repair. Promotes tRNA repair and recycling downstream of the ribosome-associated quality control (RQC) pathway by mediating addition of the tRNA 3'-terminal CCA following cleavage by ANKZF1 and repair by ELAC1. Also involved in tRNA surveillance by mediating tandem CCA addition to generate a CCACCA at the 3' terminus of unstable tRNAs and tRNA-like transcripts. While stable tRNAs receive only 3'-terminal CCA, unstable tRNAs beginning with GG are marked with CCACCA and rapidly degraded. The structural flexibility of RNA controls the choice between CCA versus CCACCA addition: following the first CCA addition cycle, nucleotide-binding to the active site triggers a clockwise screw motion, producing torque on the RNA. This ejects stable RNAs, whereas unstable RNAs are refolded while bound to the enzyme and subjected to a second CCA catalytic cycle. Functionally, adds 2 C residues (CC-) to the 3' terminus of tRNA molecules instead of a complete CCA end as isoform 1 does (in vitro). This Homo sapiens (Human) protein is CCA tRNA nucleotidyltransferase 1, mitochondrial.